Here is a 107-residue protein sequence, read N- to C-terminus: Heme-degrading monooxygenase (107 aa).

Residues Ile-2–Tyr-94 form the ABM domain. A Fe cation-binding site is contributed by Asn-6. His-76 contributes to the heme binding site.

The protein belongs to the antibiotic biosynthesis monooxygenase family. Heme-degrading monooxygenase IsdG subfamily. Homodimer.

The protein localises to the cytoplasm. The catalysed reaction is heme b + 3 reduced [NADPH--hemoprotein reductase] + 3 O2 = biliverdin IXalpha + CO + Fe(2+) + 3 oxidized [NADPH--hemoprotein reductase] + 3 H2O + H(+). Its function is as follows. Allows bacterial pathogens to use the host heme as an iron source. Catalyzes the oxidative degradation of the heme macrocyclic porphyrin ring to the biliverdin in the presence of a suitable electron donor such as ascorbate or NADPH--cytochrome P450 reductase, with subsequent release of free iron. This is Heme-degrading monooxygenase from Bacillus cereus (strain ATCC 14579 / DSM 31 / CCUG 7414 / JCM 2152 / NBRC 15305 / NCIMB 9373 / NCTC 2599 / NRRL B-3711).